A 432-amino-acid chain; its full sequence is Glutamate-1-semialdehyde 2,1-aminomutase (432 aa).

At lysine 272 the chain carries N6-(pyridoxal phosphate)lysine.

The protein belongs to the class-III pyridoxal-phosphate-dependent aminotransferase family. HemL subfamily. As to quaternary structure, homodimer. The cofactor is pyridoxal 5'-phosphate.

The protein resides in the cytoplasm. The catalysed reaction is (S)-4-amino-5-oxopentanoate = 5-aminolevulinate. The protein operates within porphyrin-containing compound metabolism; protoporphyrin-IX biosynthesis; 5-aminolevulinate from L-glutamyl-tRNA(Glu): step 2/2. It participates in porphyrin-containing compound metabolism; chlorophyll biosynthesis. This chain is Glutamate-1-semialdehyde 2,1-aminomutase, found in Acaryochloris marina (strain MBIC 11017).